A 212-amino-acid chain; its full sequence is Golgi-associated RAB2 interactor protein 5A (212 aa).

2 disordered regions span residues 1–21 (MKGGRDLKAARGGADRPLAPA) and 162–212 (PFTH…LWGL). A compositionally biased stretch (acidic residues) spans 169 to 185 (APEEEEEEEEEEEEEEV).

Belongs to the GARIN family. As to quaternary structure, interacts (via N-terminus) with RAB2B (in GTP-bound form). In terms of tissue distribution, expressed in testis (at protein level).

It localises to the golgi apparatus. Its function is as follows. RAB2B effector protein which promotes cytosolic DNA-induced innate immune responses. Regulates IFN responses against DNA viruses by regulating the CGAS-STING signaling axis. The sequence is that of Golgi-associated RAB2 interactor protein 5A from Mus musculus (Mouse).